Consider the following 532-residue polypeptide: MDVRRGGGGGRIVGAARRALTWGALPLPMRITNGLAMVSLVLSSCDLLRLCSDRERPLGGREFATVVYLVSLFAHPDAPATTTGDDDDGQGGSRRARPAAAEPAPMHGHGGGMMEADDEEIVAAVASGALPSHRLESRLGDCRRAARLRREALRRVTGRGVEGLPFDGMDYQAILGQCCEMPVGYVQLPVGVAGPLLLDGREYHVPMATTEGCLVASVNRGCRAISASGGAFSVLLRDAMSRAPAVKLPSAMRAAELKAFAEAPANFELLAAVFNRSSRFGRLQDIRCALAGRNLYMRFSCITGDAMGMNMVSKGVENVLGYLQNVFPDMDVISVSGNYCSDKKPTAVNWIEGRGKSVVCEAIIKGDVVQKVLKTTVEKLVELNIIKNLAGSAVAGALGGFNAHASNIVTALFIATGQDPAQNVESSQCITMLEEVNDGDDLHISVTMPSIEVGTIGGGTCLASQAACLNLLGVKGSNHGSPGANAKRLATIVAGSVLAGELSLLAALASGHLVKSHMMYNRSSKDVAKAAS.

Residues 63-83 form a helical membrane-spanning segment; sequence FATVVYLVSLFAHPDAPATTT. Residues 77–117 are linker; it reads DAPATTTGDDDDGQGGSRRARPAAAEPAPMHGHGGGMMEAD. The segment at 78-111 is disordered; sequence APATTTGDDDDGQGGSRRARPAAAEPAPMHGHGG. Over residues 98–107 the composition is skewed to low complexity; that stretch reads PAAAEPAPMH. The segment at 118-532 is catalytic; it reads DEEIVAAVAS…SSKDVAKAAS (415 aa). Catalysis depends on E211, which acts as the Charge relay system. A glycan (N-linked (GlcNAc...) asparagine) is linked at N275. Residues K343 and D419 each act as charge relay system in the active site. H517 acts as the Proton donor in catalysis. A glycan (N-linked (GlcNAc...) asparagine) is linked at N521.

Belongs to the HMG-CoA reductase family.

Its subcellular location is the endoplasmic reticulum membrane. The catalysed reaction is (R)-mevalonate + 2 NADP(+) + CoA = (3S)-3-hydroxy-3-methylglutaryl-CoA + 2 NADPH + 2 H(+). Its pathway is metabolic intermediate biosynthesis; (R)-mevalonate biosynthesis; (R)-mevalonate from acetyl-CoA: step 3/3. Catalyzes the synthesis of mevalonate. The specific precursor of all isoprenoid compounds present in plants. This chain is 3-hydroxy-3-methylglutaryl-coenzyme A reductase 1 (HMG1), found in Oryza sativa subsp. japonica (Rice).